A 278-amino-acid chain; its full sequence is TnpB-like protein MJ0751 (278 aa).

Zn(2+) contacts are provided by C222, C225, C239, and C242.

It in the N-terminal section; belongs to the transposase 2 family. The protein in the C-terminal section; belongs to the transposase 35 family.

This is TnpB-like protein MJ0751 from Methanocaldococcus jannaschii (strain ATCC 43067 / DSM 2661 / JAL-1 / JCM 10045 / NBRC 100440) (Methanococcus jannaschii).